The sequence spans 126 residues: Aspartate 1-decarboxylase (126 aa).

S25 functions as the Schiff-base intermediate with substrate; via pyruvic acid in the catalytic mechanism. S25 carries the post-translational modification Pyruvic acid (Ser). T57 serves as a coordination point for substrate. Y58 serves as the catalytic Proton donor. Substrate is bound at residue 73–75; the sequence is GAA.

This sequence belongs to the PanD family. Heterooctamer of four alpha and four beta subunits. It depends on pyruvate as a cofactor. Post-translationally, is synthesized initially as an inactive proenzyme, which is activated by self-cleavage at a specific serine bond to produce a beta-subunit with a hydroxyl group at its C-terminus and an alpha-subunit with a pyruvoyl group at its N-terminus.

It localises to the cytoplasm. The enzyme catalyses L-aspartate + H(+) = beta-alanine + CO2. The protein operates within cofactor biosynthesis; (R)-pantothenate biosynthesis; beta-alanine from L-aspartate: step 1/1. Catalyzes the pyruvoyl-dependent decarboxylation of aspartate to produce beta-alanine. In Yersinia pseudotuberculosis serotype IB (strain PB1/+), this protein is Aspartate 1-decarboxylase.